A 161-amino-acid polypeptide reads, in one-letter code: uncharacterized protein (161 aa).

Disordered stretches follow at residues 47–83 (KPAKRNIHGHNNHTRSSNHPHSGAHSNINHNNNNNIN) and 104–137 (RRLQQNGGGGDSSSSRSSNNNNSTNDNKPQSKNY). Residues 50-64 (KRNIHGHNNHTRSSN) are compositionally biased toward basic residues. Low complexity-rich tracts occupy residues 73-83 (NINHNNNNNIN) and 115-130 (SSSSRSSNNNNSTNDN).

This is an uncharacterized protein from Dictyostelium discoideum (Social amoeba).